Here is a 186-residue protein sequence, read N- to C-terminus: Peptidyl-tRNA hydrolase (186 aa).

Position 14 (tyrosine 14) interacts with tRNA. The Proton acceptor role is filled by histidine 19. The tRNA site is built by tyrosine 64, asparagine 66, and asparagine 112.

This sequence belongs to the PTH family. In terms of assembly, monomer.

It is found in the cytoplasm. It carries out the reaction an N-acyl-L-alpha-aminoacyl-tRNA + H2O = an N-acyl-L-amino acid + a tRNA + H(+). Hydrolyzes ribosome-free peptidyl-tRNAs (with 1 or more amino acids incorporated), which drop off the ribosome during protein synthesis, or as a result of ribosome stalling. Functionally, catalyzes the release of premature peptidyl moieties from peptidyl-tRNA molecules trapped in stalled 50S ribosomal subunits, and thus maintains levels of free tRNAs and 50S ribosomes. The protein is Peptidyl-tRNA hydrolase of Bacillus anthracis.